Here is a 397-residue protein sequence, read N- to C-terminus: Probable sugar efflux transporter (397 aa).

12 helical membrane passes run 15-35, 51-71, 80-100, 103-123, 137-157, 169-189, 209-229, 246-266, 277-297, 299-319, 333-353, and 365-385; these read VIVM…PVAL, GLMI…CMLM, LLIS…FAWN, VLLI…SITA, QALG…LPLG, TFTL…RLLP, PMLI…FTAY, KATA…VLFS, LLSS…VSGI, GAIF…SLAM, VATA…ALIG, and IGYV…LMFL.

This sequence belongs to the major facilitator superfamily. SotB (TC 2.A.1.2) family.

Its subcellular location is the cell inner membrane. In terms of biological role, involved in the efflux of sugars. The physiological role may be the reduction of the intracellular concentration of toxic sugars or sugar metabolites. This chain is Probable sugar efflux transporter, found in Mannheimia succiniciproducens (strain KCTC 0769BP / MBEL55E).